We begin with the raw amino-acid sequence, 151 residues long: Transcriptional repressor NrdR (151 aa).

The segment at 3–34 (CPFCSHPDTQVVETREAEDGGFIRRRRQCGGC) is a zinc-finger region. Residues 49 to 139 (PAIVKKDGRR…VYRSFEDVDD (91 aa)) enclose the ATP-cone domain.

This sequence belongs to the NrdR family. Zn(2+) is required as a cofactor.

Its function is as follows. Negatively regulates transcription of bacterial ribonucleotide reductase nrd genes and operons by binding to NrdR-boxes. This chain is Transcriptional repressor NrdR, found in Delftia acidovorans (strain DSM 14801 / SPH-1).